The chain runs to 365 residues: S-adenosylmethionine decarboxylase proenzyme (365 aa).

Residues Glu31 and Glu34 contribute to the active site. The Schiff-base intermediate with substrate; via pyruvic acid role is filled by Ser87. A Pyruvic acid (Ser); by autocatalysis modification is found at Ser87. The active-site Proton donor; for catalytic activity is Cys101. Catalysis depends on proton acceptor; for processing activity residues Ser248 and His263.

This sequence belongs to the eukaryotic AdoMetDC family. As to quaternary structure, heterotetramer of two alpha and two beta chains. The cofactor is pyruvate. In terms of processing, is synthesized initially as an inactive proenzyme. Formation of the active enzyme involves a self-maturation process in which the active site pyruvoyl group is generated from an internal serine residue via an autocatalytic post-translational modification. Two non-identical subunits are generated from the proenzyme in this reaction, and the pyruvate is formed at the N-terminus of the alpha chain, which is derived from the carboxyl end of the proenzyme. The post-translation cleavage follows an unusual pathway, termed non-hydrolytic serinolysis, in which the side chain hydroxyl group of the serine supplies its oxygen atom to form the C-terminus of the beta chain, while the remainder of the serine residue undergoes an oxidative deamination to produce ammonia and the pyruvoyl group blocking the N-terminus of the alpha chain.

It carries out the reaction S-adenosyl-L-methionine + H(+) = S-adenosyl 3-(methylsulfanyl)propylamine + CO2. It functions in the pathway amine and polyamine biosynthesis; S-adenosylmethioninamine biosynthesis; S-adenosylmethioninamine from S-adenosyl-L-methionine: step 1/1. The polypeptide is S-adenosylmethionine decarboxylase proenzyme (smd-1) (Onchocerca volvulus).